Consider the following 911-residue polypeptide: FIGNL1-interacting regulator of recombination and mitosis (911 aa).

The tract at residues 830–853 is disordered; the sequence is SEKSQPAQTPLTEEPCAKRARQET. The segment covering 844–853 has biased composition (basic and acidic residues); sequence PCAKRARQET.

It is found in the chromosome. Its subcellular location is the centromere. It localises to the kinetochore. The protein resides in the nucleus. The protein localises to the midbody. It is found in the cytoplasm. Its subcellular location is the cytoskeleton. It localises to the spindle. Functionally, may play a role in chromosome segregation. The chain is FIGNL1-interacting regulator of recombination and mitosis from Danio rerio (Zebrafish).